A 172-amino-acid polypeptide reads, in one-letter code: Putative acetyltransferase YvoF (172 aa).

Belongs to the transferase hexapeptide repeat family.

The chain is Putative acetyltransferase YvoF (yvoF) from Bacillus subtilis (strain 168).